The chain runs to 98 residues: Large ribosomal subunit protein uL23 (98 aa).

It belongs to the universal ribosomal protein uL23 family. In terms of assembly, part of the 50S ribosomal subunit. Contacts protein L29, and trigger factor when it is bound to the ribosome.

One of the early assembly proteins it binds 23S rRNA. One of the proteins that surrounds the polypeptide exit tunnel on the outside of the ribosome. Forms the main docking site for trigger factor binding to the ribosome. The chain is Large ribosomal subunit protein uL23 from Hahella chejuensis (strain KCTC 2396).